We begin with the raw amino-acid sequence, 131 residues long: uncharacterized protein (131 aa).

This is an uncharacterized protein from Aquifex aeolicus (strain VF5).